Reading from the N-terminus, the 418-residue chain is Tryptophan synthase beta chain (418 aa).

A compositionally biased stretch (polar residues) spans Met-1–Pro-18. The disordered stretch occupies residues Met-1–Gly-23. Lys-111 is modified (N6-(pyridoxal phosphate)lysine).

It belongs to the TrpB family. Tetramer of two alpha and two beta chains. Pyridoxal 5'-phosphate serves as cofactor.

It catalyses the reaction (1S,2R)-1-C-(indol-3-yl)glycerol 3-phosphate + L-serine = D-glyceraldehyde 3-phosphate + L-tryptophan + H2O. It participates in amino-acid biosynthesis; L-tryptophan biosynthesis; L-tryptophan from chorismate: step 5/5. In terms of biological role, the beta subunit is responsible for the synthesis of L-tryptophan from indole and L-serine. The polypeptide is Tryptophan synthase beta chain (Parasynechococcus marenigrum (strain WH8102)).